The chain runs to 79 residues: D-alanyl carrier protein (79 aa).

The region spanning 1–77 (MDIKAEVIEI…KIVEGVTELR (77 aa)) is the Carrier domain. The residue at position 35 (serine 35) is an O-(pantetheine 4'-phosphoryl)serine.

This sequence belongs to the DltC family. Post-translationally, 4'-phosphopantetheine is transferred from CoA to a specific serine of apo-DCP.

The protein localises to the cytoplasm. The protein operates within cell wall biogenesis; lipoteichoic acid biosynthesis. Functionally, carrier protein involved in the D-alanylation of lipoteichoic acid (LTA). The loading of thioester-linked D-alanine onto DltC is catalyzed by D-alanine--D-alanyl carrier protein ligase DltA. The DltC-carried D-alanyl group is further transferred to cell membrane phosphatidylglycerol (PG) by forming an ester bond, probably catalyzed by DltD. D-alanylation of LTA plays an important role in modulating the properties of the cell wall in Gram-positive bacteria, influencing the net charge of the cell wall. This Streptococcus sanguinis (strain SK36) protein is D-alanyl carrier protein.